Consider the following 95-residue polypeptide: Ferredoxin-4 (95 aa).

The region spanning 2-95 (DKATLTFTDV…LGGAVKVRPA (94 aa)) is the 2Fe-2S ferredoxin-type domain. Residues C38, C43, C46, and C81 each contribute to the [2Fe-2S] cluster site.

The protein belongs to the 2Fe2S plant-type ferredoxin family. [2Fe-2S] cluster is required as a cofactor.

Ferredoxins are iron-sulfur proteins that transfer electrons in a wide variety of metabolic reactions. This ferredoxin is required for nitrogen fixation. In Rhodobacter capsulatus (Rhodopseudomonas capsulata), this protein is Ferredoxin-4 (fdxC).